The chain runs to 727 residues: Elongation factor 2 (727 aa).

The region spanning 19–260 is the tr-type G domain; it reads DQIRNMGICA…MAIKHLPNPL (242 aa). GTP contacts are provided by residues 28–35, 94–98, and 148–151; these read AHIDHGKT, DTPGH, and NKVD. His603 carries the diphthamide modification.

Belongs to the TRAFAC class translation factor GTPase superfamily. Classic translation factor GTPase family. EF-G/EF-2 subfamily.

It localises to the cytoplasm. Its function is as follows. Catalyzes the GTP-dependent ribosomal translocation step during translation elongation. During this step, the ribosome changes from the pre-translocational (PRE) to the post-translocational (POST) state as the newly formed A-site-bound peptidyl-tRNA and P-site-bound deacylated tRNA move to the P and E sites, respectively. Catalyzes the coordinated movement of the two tRNA molecules, the mRNA and conformational changes in the ribosome. This chain is Elongation factor 2 (fusA), found in Methanococcus vannielii (strain ATCC 35089 / DSM 1224 / JCM 13029 / OCM 148 / SB).